Here is a 307-residue protein sequence, read N- to C-terminus: Small ribosomal subunit biogenesis GTPase RsgA (307 aa).

Residues methionine 1–methionine 20 form a disordered region. Positions glycine 10–methionine 20 are enriched in polar residues. Residues arginine 85–phenylalanine 242 form the CP-type G domain. GTP-binding positions include asparagine 135–aspartate 138 and glycine 184–threonine 192. Zn(2+) is bound by residues cysteine 266, cysteine 271, histidine 273, and cysteine 279.

Belongs to the TRAFAC class YlqF/YawG GTPase family. RsgA subfamily. As to quaternary structure, monomer. Associates with 30S ribosomal subunit, binds 16S rRNA. It depends on Zn(2+) as a cofactor.

It localises to the cytoplasm. In terms of biological role, one of several proteins that assist in the late maturation steps of the functional core of the 30S ribosomal subunit. Helps release RbfA from mature subunits. May play a role in the assembly of ribosomal proteins into the subunit. Circularly permuted GTPase that catalyzes slow GTP hydrolysis, GTPase activity is stimulated by the 30S ribosomal subunit. This is Small ribosomal subunit biogenesis GTPase RsgA from Neisseria meningitidis serogroup C / serotype 2a (strain ATCC 700532 / DSM 15464 / FAM18).